Consider the following 217-residue polypeptide: Thiamine-phosphate synthase (217 aa).

Residues 41–45 (QYRDK) and N76 contribute to the 4-amino-2-methyl-5-(diphosphooxymethyl)pyrimidine site. D77 and D96 together coordinate Mg(2+). S115 contributes to the 4-amino-2-methyl-5-(diphosphooxymethyl)pyrimidine binding site. 142-144 (SPS) contributes to the 2-[(2R,5Z)-2-carboxy-4-methylthiazol-5(2H)-ylidene]ethyl phosphate binding site. K145 contributes to the 4-amino-2-methyl-5-(diphosphooxymethyl)pyrimidine binding site. 2-[(2R,5Z)-2-carboxy-4-methylthiazol-5(2H)-ylidene]ethyl phosphate is bound by residues G172 and 192–193 (IS).

Belongs to the thiamine-phosphate synthase family. Requires Mg(2+) as cofactor.

It carries out the reaction 2-[(2R,5Z)-2-carboxy-4-methylthiazol-5(2H)-ylidene]ethyl phosphate + 4-amino-2-methyl-5-(diphosphooxymethyl)pyrimidine + 2 H(+) = thiamine phosphate + CO2 + diphosphate. It catalyses the reaction 2-(2-carboxy-4-methylthiazol-5-yl)ethyl phosphate + 4-amino-2-methyl-5-(diphosphooxymethyl)pyrimidine + 2 H(+) = thiamine phosphate + CO2 + diphosphate. The enzyme catalyses 4-methyl-5-(2-phosphooxyethyl)-thiazole + 4-amino-2-methyl-5-(diphosphooxymethyl)pyrimidine + H(+) = thiamine phosphate + diphosphate. Its pathway is cofactor biosynthesis; thiamine diphosphate biosynthesis; thiamine phosphate from 4-amino-2-methyl-5-diphosphomethylpyrimidine and 4-methyl-5-(2-phosphoethyl)-thiazole: step 1/1. In terms of biological role, condenses 4-methyl-5-(beta-hydroxyethyl)thiazole monophosphate (THZ-P) and 2-methyl-4-amino-5-hydroxymethyl pyrimidine pyrophosphate (HMP-PP) to form thiamine monophosphate (TMP). The protein is Thiamine-phosphate synthase of Acidithiobacillus ferrooxidans (strain ATCC 23270 / DSM 14882 / CIP 104768 / NCIMB 8455) (Ferrobacillus ferrooxidans (strain ATCC 23270)).